We begin with the raw amino-acid sequence, 389 residues long: MQQHSSKTAYVYSDKLLQYRFHDQHPFNQMRLKLTTELLLNANLLSPEQIVQPRIATGDELMLIHKYDYVEAIKHASHGIISEDEAKKYGLNDEENGQFKHMHRHSATIVGGALTLADLIMSGKVLNGCHLGGGLHHAQPGRASGFCIYNDIAITAQYIAKEYNQRVLIIDTDAHHGDGTQWSFYADNHVTTYSIHETGKFLFPGSGHYTERGEDIGYGHTVNVPLEPYTEDASFLECFKLTVEPVVKSFKPDIILSVNGVDIHYRDPLTHLNCTLHSLYEIPYFVKYLADSYTNGKVIMFGGGGYNIWRVVPRAWSHVFLSLIDQPIQSGYLPLEWINKWKHYSSELLPKRWEDRLNDYTYVPRTKEISEKNKKLALHIASWYESTRQ.

It belongs to the histone deacetylase family.

It functions in the pathway ketone degradation; acetoin degradation. In terms of biological role, role in growth on acetoin or butanediol. Involved in the breakdown of these compounds used as a carbon source. This chain is Acetoin utilization protein AcuC (acuC), found in Staphylococcus aureus (strain Mu50 / ATCC 700699).